We begin with the raw amino-acid sequence, 150 residues long: SsrA-binding protein (150 aa).

The protein belongs to the SmpB family.

The protein resides in the cytoplasm. Its function is as follows. Required for rescue of stalled ribosomes mediated by trans-translation. Binds to transfer-messenger RNA (tmRNA), required for stable association of tmRNA with ribosomes. tmRNA and SmpB together mimic tRNA shape, replacing the anticodon stem-loop with SmpB. tmRNA is encoded by the ssrA gene; the 2 termini fold to resemble tRNA(Ala) and it encodes a 'tag peptide', a short internal open reading frame. During trans-translation Ala-aminoacylated tmRNA acts like a tRNA, entering the A-site of stalled ribosomes, displacing the stalled mRNA. The ribosome then switches to translate the ORF on the tmRNA; the nascent peptide is terminated with the 'tag peptide' encoded by the tmRNA and targeted for degradation. The ribosome is freed to recommence translation, which seems to be the essential function of trans-translation. This is SsrA-binding protein from Borrelia garinii subsp. bavariensis (strain ATCC BAA-2496 / DSM 23469 / PBi) (Borreliella bavariensis).